The primary structure comprises 109 residues: MSAQPVDLQIFGRSLRVNCPPEQRDALNQAAEDLNQRLQDLKERTRVTNTEQLVFIAALNISYELTQEKAKTRDYASSMEQRIRMLQQTIEQALLEQGRISERPGSKFE.

Residues 21–99 (PEQRDALNQA…IEQALLEQGR (79 aa)) adopt a coiled-coil conformation.

The protein belongs to the ZapA family. Type 1 subfamily. Homodimer. Interacts with FtsZ.

It is found in the cytoplasm. In terms of biological role, activator of cell division through the inhibition of FtsZ GTPase activity, therefore promoting FtsZ assembly into bundles of protofilaments necessary for the formation of the division Z ring. It is recruited early at mid-cell but it is not essential for cell division. The sequence is that of Cell division protein ZapA from Klebsiella pneumoniae (strain 342).